A 300-amino-acid chain; its full sequence is Small ribosomal subunit protein uS2 (300 aa).

Positions 269–300 are disordered; that stretch reads WEADGADWAASSAAAPAESWAAEAQGAEGAKW.

This sequence belongs to the universal ribosomal protein uS2 family. As to quaternary structure, component of the small ribosomal subunit. Mature ribosomes consist of a small (40S) and a large (60S) subunit. The 40S subunit contains about 33 different proteins and 1 molecule of RNA (18S). The 60S subunit contains about 49 different proteins and 3 molecules of RNA (25S, 5.8S and 5S). Interacts with rps21.

It localises to the cytoplasm. In terms of biological role, required for the assembly and/or stability of the 40S ribosomal subunit. Required for the processing of the 20S rRNA-precursor to mature 18S rRNA in a late step of the maturation of 40S ribosomal subunits. The sequence is that of Small ribosomal subunit protein uS2 (rps0) from Aspergillus terreus (strain NIH 2624 / FGSC A1156).